Reading from the N-terminus, the 364-residue chain is MKGLILVGGYGTRLRPLTLSVPKPLVEFANKPMIVHQIEALVAAGVTDIVLAVNYRPEVMEKFLAEYEEKFGINIEFSVETEPLDTAGPLKLAERILAKDDSPFFVLNSDVICDFPFEDLLAFHKSHGNEGTIVVTKVEEPSKYGVVVHQPGHRSLIDRFVEKPVEFVGNRINAGLYIFNTSILDRIELRPTSIEKETFPAMVKDNQLHSFDLEGFWMDVGQPKDFLSGTCLYLSSLTKKGSKELTSPSEPFVHGGNVLIDPSAKIGKNCRIGPNVTIGPNVVIGDGVRLQRCVLLKGSKVKDHAWVKSTIVGWNSTIGRWARLENVTVLGDDVTVGDEIYVNGGSVLPHKSIKANVDIPAIIM.

It belongs to the transferase hexapeptide repeat family.

The protein resides in the cytoplasm. The enzyme catalyses alpha-D-mannose 1-phosphate + GTP + H(+) = GDP-alpha-D-mannose + diphosphate. Its pathway is nucleotide-sugar biosynthesis; GDP-alpha-D-mannose biosynthesis; GDP-alpha-D-mannose from alpha-D-mannose 1-phosphate (GTP route): step 1/1. In terms of biological role, involved in cell wall synthesis where it is required for glycosylation. Involved in cell cycle progression through cell-size checkpoint. The chain is Mannose-1-phosphate guanyltransferase (MPG1) from Gibberella zeae (strain ATCC MYA-4620 / CBS 123657 / FGSC 9075 / NRRL 31084 / PH-1) (Wheat head blight fungus).